The primary structure comprises 90 residues: Small ribosomal subunit protein uS15 (90 aa).

It belongs to the universal ribosomal protein uS15 family. In terms of assembly, part of the 30S ribosomal subunit. Forms a bridge to the 50S subunit in the 70S ribosome, contacting the 23S rRNA.

In terms of biological role, one of the primary rRNA binding proteins, it binds directly to 16S rRNA where it helps nucleate assembly of the platform of the 30S subunit by binding and bridging several RNA helices of the 16S rRNA. Forms an intersubunit bridge (bridge B4) with the 23S rRNA of the 50S subunit in the ribosome. This Thermotoga maritima (strain ATCC 43589 / DSM 3109 / JCM 10099 / NBRC 100826 / MSB8) protein is Small ribosomal subunit protein uS15.